The sequence spans 260 residues: Proteasome subunit alpha 1 (260 aa).

Residues 237-260 (AEADLLDTGEDADDEAEDEDATEE) are disordered. Residues 240-260 (DLLDTGEDADDEAEDEDATEE) show a composition bias toward acidic residues.

It belongs to the peptidase T1A family. As to quaternary structure, the 20S proteasome core is composed of 14 alpha and 14 beta subunits that assemble into four stacked heptameric rings, resulting in a barrel-shaped structure. The two inner rings, each composed of seven catalytic beta subunits, are sandwiched by two outer rings, each composed of seven alpha subunits. The catalytic chamber with the active sites is on the inside of the barrel. Has a gated structure, the ends of the cylinder being occluded by the N-termini of the alpha-subunits. Is capped at one or both ends by the proteasome regulatory ATPase, PAN.

It is found in the cytoplasm. The formation of the proteasomal ATPase PAN-20S proteasome complex, via the docking of the C-termini of PAN into the intersubunit pockets in the alpha-rings, triggers opening of the gate for substrate entry. Interconversion between the open-gate and close-gate conformations leads to a dynamic regulation of the 20S proteasome proteolysis activity. In terms of biological role, component of the proteasome core, a large protease complex with broad specificity involved in protein degradation. The chain is Proteasome subunit alpha 1 from Haloarcula marismortui (strain ATCC 43049 / DSM 3752 / JCM 8966 / VKM B-1809) (Halobacterium marismortui).